The primary structure comprises 417 residues: NADH-quinone oxidoreductase subunit D (417 aa).

It belongs to the complex I 49 kDa subunit family. In terms of assembly, NDH-1 is composed of 14 different subunits. Subunits NuoB, C, D, E, F, and G constitute the peripheral sector of the complex.

The protein localises to the cell inner membrane. The enzyme catalyses a quinone + NADH + 5 H(+)(in) = a quinol + NAD(+) + 4 H(+)(out). Functionally, NDH-1 shuttles electrons from NADH, via FMN and iron-sulfur (Fe-S) centers, to quinones in the respiratory chain. The immediate electron acceptor for the enzyme in this species is believed to be ubiquinone. Couples the redox reaction to proton translocation (for every two electrons transferred, four hydrogen ions are translocated across the cytoplasmic membrane), and thus conserves the redox energy in a proton gradient. The polypeptide is NADH-quinone oxidoreductase subunit D (Francisella tularensis subsp. tularensis (strain FSC 198)).